The primary structure comprises 363 residues: tRNA N6-adenosine threonylcarbamoyltransferase (363 aa).

Fe cation is bound by residues H138, H142, and Y159. Residues 159-163, D191, D212, and S295 contribute to the substrate site; that span reads YVSGG. D323 contacts Fe cation.

The protein belongs to the KAE1 / TsaD family. Requires Fe(2+) as cofactor.

It is found in the cytoplasm. It catalyses the reaction L-threonylcarbamoyladenylate + adenosine(37) in tRNA = N(6)-L-threonylcarbamoyladenosine(37) in tRNA + AMP + H(+). In terms of biological role, required for the formation of a threonylcarbamoyl group on adenosine at position 37 (t(6)A37) in tRNAs that read codons beginning with adenine. Is probably involved in the transfer of the threonylcarbamoyl moiety of threonylcarbamoyl-AMP (TC-AMP) to the N6 group of A37. The chain is tRNA N6-adenosine threonylcarbamoyltransferase from Hyperthermus butylicus (strain DSM 5456 / JCM 9403 / PLM1-5).